Here is an 822-residue protein sequence, read N- to C-terminus: AP-1 complex subunit gamma-1 (822 aa).

Residues 593–604 (NGPSEIVQTNGE) show a composition bias toward polar residues. Positions 593-627 (NGPSEIVQTNGETEPAPLETKPPPSGPQPTSQAND) are disordered. The GAE domain occupies 702–817 (PGIPSITAYS…QDLAEVNNFP (116 aa)).

Belongs to the adaptor complexes large subunit family. Adaptor protein complex 1 (AP-1) is a heterotetramer composed of two large adaptins (gamma-type subunit AP1G1 and beta-type subunit AP1B1), a medium adaptin (mu-type subunit AP1M1 or AP1M2) and a small adaptin (sigma-type subunit AP1S1 or AP1S2 or AP1S3). Interacts (via GAE domain) with RABEP1. Interacts with EPS15. Interacts with SYNRG/gamma-synergin. Interacts (via GAE domain) with AP1AR (via coiled-coil domain). Interacts with CLN3 (via dileucine motif); this interaction facilitates lysosomal targeting. Interacts (via GAE domain) with AFTPH/aftiphilin; the interaction is required to recruit AFTPH/aftiphilin to the perinuclear region of the cell. As to expression, widely expressed.

It localises to the golgi apparatus. Its subcellular location is the cytoplasmic vesicle. It is found in the clathrin-coated vesicle membrane. The protein resides in the cytoplasm. The protein localises to the perinuclear region. It localises to the clathrin-coated vesicle. Its subcellular location is the membrane. It is found in the clathrin-coated pit. Subunit of clathrin-associated adaptor protein complex 1 that plays a role in protein sorting in the late-Golgi/trans-Golgi network (TGN) and/or endosomes. The AP complexes mediate both the recruitment of clathrin to membranes and the recognition of sorting signals within the cytosolic tails of transmembrane cargo molecules. In association with AFTPH/aftiphilin in the aftiphilin/p200/gamma-synergin complex, involved in the trafficking of transferrin from early to recycling endosomes, and the membrane trafficking of furin and the lysosomal enzyme cathepsin D between the trans-Golgi network (TGN) and endosomes. The polypeptide is AP-1 complex subunit gamma-1 (Ap1g1) (Mus musculus (Mouse)).